Reading from the N-terminus, the 433-residue chain is 3-phosphoshikimate 1-carboxyvinyltransferase (433 aa).

3 residues coordinate 3-phosphoshikimate: Lys22, Ser23, and Arg27. Lys22 is a phosphoenolpyruvate binding site. Phosphoenolpyruvate-binding residues include Gly96 and Arg130. Ser176, Ser177, Gln178, Ser204, Asp319, Asn342, and Lys346 together coordinate 3-phosphoshikimate. Gln178 serves as a coordination point for phosphoenolpyruvate. Asp319 acts as the Proton acceptor in catalysis. Arg350, Arg394, and Lys419 together coordinate phosphoenolpyruvate.

Belongs to the EPSP synthase family. Monomer.

It localises to the cytoplasm. It catalyses the reaction 3-phosphoshikimate + phosphoenolpyruvate = 5-O-(1-carboxyvinyl)-3-phosphoshikimate + phosphate. The protein operates within metabolic intermediate biosynthesis; chorismate biosynthesis; chorismate from D-erythrose 4-phosphate and phosphoenolpyruvate: step 6/7. Catalyzes the transfer of the enolpyruvyl moiety of phosphoenolpyruvate (PEP) to the 5-hydroxyl of shikimate-3-phosphate (S3P) to produce enolpyruvyl shikimate-3-phosphate and inorganic phosphate. The sequence is that of 3-phosphoshikimate 1-carboxyvinyltransferase from Actinobacillus succinogenes (strain ATCC 55618 / DSM 22257 / CCUG 43843 / 130Z).